Reading from the N-terminus, the 157-residue chain is ATP synthase subunit b (157 aa).

Residues 7-29 form a helical membrane-spanning segment; sequence MFGQLIMFTMFTWFCMKFVWPPI.

This sequence belongs to the ATPase B chain family. F-type ATPases have 2 components, F(1) - the catalytic core - and F(0) - the membrane proton channel. F(1) has five subunits: alpha(3), beta(3), gamma(1), delta(1), epsilon(1). F(0) has three main subunits: a(1), b(2) and c(10-14). The alpha and beta chains form an alternating ring which encloses part of the gamma chain. F(1) is attached to F(0) by a central stalk formed by the gamma and epsilon chains, while a peripheral stalk is formed by the delta and b chains.

It is found in the cell inner membrane. Functionally, f(1)F(0) ATP synthase produces ATP from ADP in the presence of a proton or sodium gradient. F-type ATPases consist of two structural domains, F(1) containing the extramembraneous catalytic core and F(0) containing the membrane proton channel, linked together by a central stalk and a peripheral stalk. During catalysis, ATP synthesis in the catalytic domain of F(1) is coupled via a rotary mechanism of the central stalk subunits to proton translocation. In terms of biological role, component of the F(0) channel, it forms part of the peripheral stalk, linking F(1) to F(0). In Ruthia magnifica subsp. Calyptogena magnifica, this protein is ATP synthase subunit b.